The following is a 152-amino-acid chain: Small ribosomal subunit protein uS13 (152 aa).

Belongs to the universal ribosomal protein uS13 family. As to quaternary structure, component of the small ribosomal subunit.

Its subcellular location is the cytoplasm. Component of the small ribosomal subunit. The ribosome is a large ribonucleoprotein complex responsible for the synthesis of proteins in the cell. The protein is Small ribosomal subunit protein uS13 (rps18) of Ictalurus punctatus (Channel catfish).